The following is a 471-amino-acid chain: Alpha-galactosidase 5 (471 aa).

Residues 1-18 (MFAFYFLTACTTLKGVFG) form the signal peptide. A disulfide bridge connects residues Cys42 and Cys74. Residues Asp72 and Asp73 each coordinate substrate. Asn105 carries N-linked (GlcNAc...) asparagine glycosylation. A disulfide bond links Cys121 and Cys151. Substrate is bound at residue Lys147. The active-site Nucleophile is the Asp149. Asn175 carries an N-linked (GlcNAc...) asparagine glycan. Arg205 is a binding site for substrate. Asp209 functions as the Proton donor in the catalytic mechanism. Intrachain disulfides connect Cys221–Cys237 and Cys223–Cys230. Gln251 serves as a coordination point for substrate. N-linked (GlcNAc...) asparagine glycosylation is found at Asn270, Asn370, Asn403, Asn422, Asn435, and Asn454.

The protein belongs to the glycosyl hydrolase 27 family. Homotetramer.

The protein localises to the secreted. It catalyses the reaction Hydrolysis of terminal, non-reducing alpha-D-galactose residues in alpha-D-galactosides, including galactose oligosaccharides, galactomannans and galactolipids.. The chain is Alpha-galactosidase 5 (MEL5) from Saccharomyces cerevisiae (Baker's yeast).